A 200-amino-acid chain; its full sequence is Recombination protein RecR (200 aa).

The C4-type zinc finger occupies cysteine 58–cysteine 75. The 96-residue stretch at serine 82 to proline 177 folds into the Toprim domain.

This sequence belongs to the RecR family.

In terms of biological role, may play a role in DNA repair. It seems to be involved in an RecBC-independent recombinational process of DNA repair. It may act with RecF and RecO. This is Recombination protein RecR from Chlamydia trachomatis serovar L2 (strain ATCC VR-902B / DSM 19102 / 434/Bu).